Here is a 186-residue protein sequence, read N- to C-terminus: Ribosome-recycling factor (186 aa).

This sequence belongs to the RRF family.

Its subcellular location is the cytoplasm. Responsible for the release of ribosomes from messenger RNA at the termination of protein biosynthesis. May increase the efficiency of translation by recycling ribosomes from one round of translation to another. In Brucella melitensis biotype 2 (strain ATCC 23457), this protein is Ribosome-recycling factor.